The primary structure comprises 495 residues: Phenylalanine--tRNA ligase alpha subunit (495 aa).

L-phenylalanine contacts are provided by residues Thr338, 377–379 (QLE), and Tyr417. Glu419 is a Mg(2+) binding site. Phe442 contacts L-phenylalanine.

The protein belongs to the class-II aminoacyl-tRNA synthetase family. Phe-tRNA synthetase alpha subunit type 2 subfamily. In terms of assembly, tetramer of two alpha and two beta subunits. Mg(2+) serves as cofactor.

The protein resides in the cytoplasm. The enzyme catalyses tRNA(Phe) + L-phenylalanine + ATP = L-phenylalanyl-tRNA(Phe) + AMP + diphosphate + H(+). The chain is Phenylalanine--tRNA ligase alpha subunit from Methanosarcina mazei (strain ATCC BAA-159 / DSM 3647 / Goe1 / Go1 / JCM 11833 / OCM 88) (Methanosarcina frisia).